We begin with the raw amino-acid sequence, 363 residues long: RNA polymerase II holoenzyme cyclin-like subunit (363 aa).

A Cyclin N-terminal domain is found at 53-143 (YQMLRLAKNL…IGECEFWLIS (91 aa)). The segment at 252 to 312 (TPGGSGSPAM…SPQKEKSKLQ (61 aa)) is disordered. Residues 265 to 276 (IQQNPPNQAYQL) are compositionally biased toward polar residues. The span at 277–298 (TPQQQEMFRQQQMQQQNRQPET) shows a compositional bias: low complexity. Over residues 299–310 (QAKDSPQKEKSK) the composition is skewed to basic and acidic residues.

Belongs to the cyclin family. Cyclin C subfamily. Component of the SRB8-11 complex, a regulatory module of the Mediator complex.

Its subcellular location is the nucleus. Component of the SRB8-11 complex. The SRB8-11 complex is a regulatory module of the Mediator complex which is itself involved in regulation of basal and activated RNA polymerase II-dependent transcription. The SRB8-11 complex may be involved in the transcriptional repression of a subset of genes regulated by Mediator. It may inhibit the association of the Mediator complex with RNA polymerase II to form the holoenzyme complex. The SRB8-11 complex phosphorylates the C-terminal domain (CTD) of the largest subunit of RNA polymerase II. The sequence is that of RNA polymerase II holoenzyme cyclin-like subunit (SSN8) from Pyricularia oryzae (strain 70-15 / ATCC MYA-4617 / FGSC 8958) (Rice blast fungus).